The chain runs to 149 residues: Pleckstrin homology domain-containing family J member 1 (149 aa).

Positions 15 to 108 (PAEMAAELGM…WMAALRQASY (94 aa)) constitute a PH domain.

In Bos taurus (Bovine), this protein is Pleckstrin homology domain-containing family J member 1 (PLEKHJ1).